Here is a 76-residue protein sequence, read N- to C-terminus: Conotoxin VnMEKL-0111 (76 aa).

Residues 1–18 form the signal peptide; that stretch reads MKLTILFLVAAVLMSTQA. Residues 19 to 45 constitute a propeptide that is removed on maturation; the sequence is LIQHDGEKSQKAKMKFLTARTLSAKTR. Cystine bridges form between C49-C65, C56-C70, and C64-C74.

Belongs to the conotoxin O2 superfamily. Expressed by the venom duct.

It is found in the secreted. The chain is Conotoxin VnMEKL-0111 from Conus ventricosus (Mediterranean cone).